The primary structure comprises 196 residues: Large ribosomal subunit protein uL10 (196 aa).

Residues 163–196 form a disordered region; that stretch reads GAPAAAEAPAAEEAPAAEAAETEAPAEAAATEEN. The segment covering 164-196 has biased composition (low complexity); the sequence is APAAAEAPAAEEAPAAEAAETEAPAEAAATEEN.

The protein belongs to the universal ribosomal protein uL10 family. As to quaternary structure, part of the ribosomal stalk of the 50S ribosomal subunit. The N-terminus interacts with L11 and the large rRNA to form the base of the stalk. The C-terminus forms an elongated spine to which L12 dimers bind in a sequential fashion forming a multimeric L10(L12)X complex.

Functionally, forms part of the ribosomal stalk, playing a central role in the interaction of the ribosome with GTP-bound translation factors. The polypeptide is Large ribosomal subunit protein uL10 (Arthrobacter sp. (strain FB24)).